Reading from the N-terminus, the 485-residue chain is Caspid protein (485 aa).

N-linked (GlcNAc...) asparagine; by host glycosylation is found at asparagine 5 and asparagine 178. The particle formation stretch occupies residues 236 to 262 (IALTLFNLADTLLGGLPTELISSAGGQ). Asparagine 430 carries N-linked (GlcNAc...) asparagine; by host glycosylation. The interval 453–478 (TTSLGAGPVSISAVAVLAPHSALALL) is oligomerization.

The protein belongs to the hepevirus capsid protein family. In terms of assembly, self-assembles to form the capsid. The capsid is dominated by dimers that define the 30 morphological units. Interacts with phosphorylated protein ORF3. Interacts with host TMEM134. Interacts with host ASGR1 and ASGR2; these interactions facilitate infection of host hepatocytes. Post-translationally, not N-glycosylated.

Its subcellular location is the virion. It is found in the host cytoplasm. It localises to the host endoplasmic reticulum. The protein localises to the host Golgi apparatus. The protein resides in the host cell surface. Its subcellular location is the host nucleus. In terms of biological role, forms an icosahedral capsid with a T=1 symmetry and a 34 nm diameter. The capsid is composed of 60 copies linked to each other. Binds to the 5' end of the genomic RNA to mediate genome encapsidation. Binds to heparin surface proteoglycans (HSPGs) to mediate viral entry. Additionally, the interactions with host ASGR1 and ASGR2 facilitate viral infection of hepatocytes. Inhibits IFN production by blocking host TBK1-induced IRF3 phosphorylation. The nuclear form probably modulates host gene expression. The chain is Caspid protein from Hepatitis E virus (isolate Rhesus/HT-4) (HEV).